Here is a 1932-residue protein sequence, read N- to C-terminus: DOCK-like protein 1 (1932 aa).

The region spanning 1410-1824 is the DOCKER domain; it reads LLEANRPELF…EIERYSRTLS (415 aa). Residues 1908-1921 show a composition bias toward polar residues; the sequence is STFLAGSQPNTNTD. Positions 1908-1932 are disordered; that stretch reads STFLAGSQPNTNTDSQHKHDYSHSG. A compositionally biased stretch (basic and acidic residues) spans 1922 to 1932; sequence SQHKHDYSHSG.

The protein belongs to the DOCK family. Forms an active heterodimer with LMO1.

Its subcellular location is the cytoplasm. It localises to the mitochondrion. In terms of biological role, forms a transiant heterodimeric complex with LMO1, that acts as a guanine nucleotide exchange factor exchange factor (GEF) for the small GTPase RHO5. DCK1, LMO1 and RHO5 relocate to mitochondria upon oxidative stress and trigger cell death. The DCK1/LMO1/RHO5 signaling module mediates mitochondrial turnover under nitrogen starvation conditions via mitophagy. The DCK1/LMO1/RHO5 signaling module plays also a function in cell wall integrity signaling. The chain is DOCK-like protein 1 from Saccharomyces cerevisiae (strain ATCC 204508 / S288c) (Baker's yeast).